We begin with the raw amino-acid sequence, 214 residues long: ATP phosphoribosyltransferase (214 aa).

It belongs to the ATP phosphoribosyltransferase family. Short subfamily. In terms of assembly, heteromultimer composed of HisG and HisZ subunits.

The protein localises to the cytoplasm. The catalysed reaction is 1-(5-phospho-beta-D-ribosyl)-ATP + diphosphate = 5-phospho-alpha-D-ribose 1-diphosphate + ATP. It functions in the pathway amino-acid biosynthesis; L-histidine biosynthesis; L-histidine from 5-phospho-alpha-D-ribose 1-diphosphate: step 1/9. Catalyzes the condensation of ATP and 5-phosphoribose 1-diphosphate to form N'-(5'-phosphoribosyl)-ATP (PR-ATP). Has a crucial role in the pathway because the rate of histidine biosynthesis seems to be controlled primarily by regulation of HisG enzymatic activity. This chain is ATP phosphoribosyltransferase, found in Leptothrix cholodnii (strain ATCC 51168 / LMG 8142 / SP-6) (Leptothrix discophora (strain SP-6)).